The sequence spans 139 residues: NAD(P) transhydrogenase subunit alpha part 2 (139 aa).

A run of 3 helical transmembrane segments spans residues 49 to 69 (FWWL…VVWS), 78 to 98 (LMGV…IATG), and 107 to 127 (VLGF…FIVT).

Complex of an alpha and a beta chain; in Rhodospirillum, the alpha chain seems to be made of two subunits.

It is found in the cell inner membrane. It carries out the reaction NAD(+) + NADPH + H(+)(in) = NADH + NADP(+) + H(+)(out). Functionally, the transhydrogenation between NADH and NADP is coupled to respiration and ATP hydrolysis and functions as a proton pump across the membrane. The polypeptide is NAD(P) transhydrogenase subunit alpha part 2 (pntAB) (Rhodospirillum rubrum (strain ATCC 11170 / ATH 1.1.1 / DSM 467 / LMG 4362 / NCIMB 8255 / S1)).